A 337-amino-acid polypeptide reads, in one-letter code: Ketol-acid reductoisomerase (NADP(+)) (337 aa).

The 181-residue stretch at 3–183 (VEVFYDDDAD…GGTRAGVIKT (181 aa)) folds into the KARI N-terminal Rossmann domain. NADP(+) is bound by residues 26-29 (YGSQ), Ser-52, Ser-54, and 84-87 (DTAQ). His-109 is an active-site residue. An NADP(+)-binding site is contributed by Gly-135. The 146-residue stretch at 184 to 329 (TFTEETETDL…GRLRAMMSWV (146 aa)) folds into the KARI C-terminal knotted domain. The Mg(2+) site is built by Asp-192, Glu-196, Glu-228, and Glu-232. Residue Ser-253 coordinates substrate.

Belongs to the ketol-acid reductoisomerase family. Mg(2+) is required as a cofactor.

It carries out the reaction (2R)-2,3-dihydroxy-3-methylbutanoate + NADP(+) = (2S)-2-acetolactate + NADPH + H(+). The catalysed reaction is (2R,3R)-2,3-dihydroxy-3-methylpentanoate + NADP(+) = (S)-2-ethyl-2-hydroxy-3-oxobutanoate + NADPH + H(+). Its pathway is amino-acid biosynthesis; L-isoleucine biosynthesis; L-isoleucine from 2-oxobutanoate: step 2/4. The protein operates within amino-acid biosynthesis; L-valine biosynthesis; L-valine from pyruvate: step 2/4. Involved in the biosynthesis of branched-chain amino acids (BCAA). Catalyzes an alkyl-migration followed by a ketol-acid reduction of (S)-2-acetolactate (S2AL) to yield (R)-2,3-dihydroxy-isovalerate. In the isomerase reaction, S2AL is rearranged via a Mg-dependent methyl migration to produce 3-hydroxy-3-methyl-2-ketobutyrate (HMKB). In the reductase reaction, this 2-ketoacid undergoes a metal-dependent reduction by NADPH to yield (R)-2,3-dihydroxy-isovalerate. The chain is Ketol-acid reductoisomerase (NADP(+)) from Salinispora tropica (strain ATCC BAA-916 / DSM 44818 / JCM 13857 / NBRC 105044 / CNB-440).